The primary structure comprises 389 residues: UDP-D-apiose/UDP-D-xylose synthase 1 (389 aa).

Residues Phe-28, Ile-29, Asp-49, Asn-76, Ile-77, and Leu-96 each contribute to the NAD(+) site. UDP-alpha-D-glucuronate contacts are provided by Tyr-105, Thr-139, Glu-141, Arg-182, and Tyr-185. Tyr-185 and Lys-189 together coordinate NAD(+). Tyr-185 acts as the Proton acceptor in catalysis. Asn-214 is a binding site for UDP-alpha-D-glucuronate. Residues Trp-215 and Arg-235 each coordinate NAD(+). 7 residues coordinate UDP-alpha-D-glucuronate: Lys-251, Val-253, Arg-260, Tyr-331, Tyr-335, Asp-337, and Arg-341.

It belongs to the NAD(P)-dependent epimerase/dehydratase family. As to quaternary structure, homodimer and heterodimer with AXS2. Requires NAD(+) as cofactor. In terms of tissue distribution, widely expressed with stronger expression in leaves and stems, and lower levels in flowers, siliques, pistils, pollen and roots.

It is found in the cytoplasm. The enzyme catalyses UDP-alpha-D-glucuronate + H(+) = UDP-alpha-D-xylose + CO2. It catalyses the reaction UDP-alpha-D-glucuronate + H(+) = UDP-alpha-D-apiose + CO2. Inhibited by UDP-D-galacturonate. Functionally, together with AXS2, catalyzes the conversion of UDP-D-glucuronate into a mixture of UDP-D-apiose (UDP-Api) as the main product and UDP-D-xylose to a lesser extent, via a cycle of oxidation and reduction. D-Apiose (3-C-hydroxymethyl-d-erythrose) is the only plant cell wall monosaccharide with a branched carbon skeleton and is found in rhamnogalacturonan II (RG-II), apiogalacturonan, and several apioglycosides. This Arabidopsis thaliana (Mouse-ear cress) protein is UDP-D-apiose/UDP-D-xylose synthase 1.